We begin with the raw amino-acid sequence, 219 residues long: GTP-binding protein Rab-3D (219 aa).

Ala-2 bears the N-acetylalanine mark. GDP is bound at residue 29-37; it reads GNSSVGKTS. Ser-31, Ser-32, Val-33, Gly-34, Lys-35, Thr-36, Ser-37, Pro-49, and Ser-53 together coordinate GTP. Thr-36 serves as a coordination point for Mg(2+). Residues 49-58 carry the Switch 1 motif; it reads PAFVSTVGID. Residues Thr-54 and Asp-77 each contribute to the Mg(2+) site. Gly-80 contacts GTP. The Switch 2 signature appears at 80–96; that stretch reads GQERYRTITTAYYRGAM. A Phosphothreonine modification is found at Thr-86. Residues Asn-135, Lys-136, Asp-138, Ala-166, and Lys-167 each contribute to the GTP site. GDP-binding positions include 135–138 and 165–167; these read NKCD and SAK. A Phosphoserine modification is found at Ser-190. Positions 190-219 are disordered; it reads SLEPSSSPGSNGKGPALGDTPPPQPSSCGC. Residues 193 to 203 are compositionally biased toward low complexity; that stretch reads PSSSPGSNGKG. The span at 209–219 shows a compositional bias: pro residues; the sequence is TPPPQPSSCGC. Residues Cys-217 and Cys-219 are each lipidated (S-geranylgeranyl cysteine). A Cysteine methyl ester; partial modification is found at Cys-219.

It belongs to the small GTPase superfamily. Rab family. In terms of assembly, interacts with RIMS1, RIMS2, RPH3A and RPH3AL. Interacts with RAB3IP. The GTP-bound form interacts with REP15. Interacts with CHM; phosphorylation at Thr-86 disrupts this interaction. Interacts with MADD (via uDENN domain); the GTP-bound form is preferred for interaction. Mg(2+) is required as a cofactor. Post-translationally, in fetal glands the majority of the proteins are methylated, whereas in neonatal and adult glands, only 50% are methylated. In terms of processing, phosphorylation of Thr-86 in the switch II region by LRRK2 prevents the association of RAB regulatory proteins, including CHM. As to expression, highest levels found in lung.

It localises to the cell membrane. It catalyses the reaction GTP + H2O = GDP + phosphate + H(+). With respect to regulation, regulated by guanine nucleotide exchange factors (GEFs) which promote the exchange of bound GDP for free GTP. Regulated by GTPase activating proteins (GAPs) which increase the GTP hydrolysis activity. Inhibited by GDP dissociation inhibitors (GDIs) which prevent Rab-GDP dissociation. In terms of biological role, the small GTPases Rab are key regulators of intracellular membrane trafficking, from the formation of transport vesicles to their fusion with membranes. Rabs cycle between an inactive GDP-bound form and an active GTP-bound form that is able to recruit to membranes different sets of downstream effectors directly responsible for vesicle formation, movement, tethering and fusion. RAB3D may be involved in the insulin-induced exocytosis of GLUT4-containing vesicles in adipocytes. The polypeptide is GTP-binding protein Rab-3D (Rattus norvegicus (Rat)).